Reading from the N-terminus, the 122-residue chain is Large ribosomal subunit protein bL19 (122 aa).

Belongs to the bacterial ribosomal protein bL19 family.

In terms of biological role, this protein is located at the 30S-50S ribosomal subunit interface and may play a role in the structure and function of the aminoacyl-tRNA binding site. This is Large ribosomal subunit protein bL19 from Prosthecochloris aestuarii (strain DSM 271 / SK 413).